The sequence spans 465 residues: MSAKLLNSNLWEADPELFDIIVKEKDRQRAGLEMIASENFTSVPVLQCLSSCLHNKYSEGMPNQRYYGGNEYIDEIEILAQNRSLEAYRLKSEEWGVNVQPYSGSPANFAVYTGIVEPHGRIMGLDLPDGGHLTHGFFTATKKISATSIFFESMPYKVDPKSGLIDYDKLAETAKLFKPRLIIAGMSCYSRCLDYKRFREIADANGAYLMADMAHVSGLVAAGVIPSPFEYCDIVTTTTHKTLRGPRAGVIFFRKGVRSVKANGQKVMYDLESKINQAVFPGLQGGPHNHAIAAIATAMKQATTTEFVEYQKQVIKNAQRLCEGLISRGYSIATGGTDVHLALVDLRGVGLRGAPAERVLELCSVACNKNTVPGDISALNPSGIRLGTPALTTRGLKEADIDKVVDFIDRALKIGLEIIKVSGLKLVDFNKAIEENAEFKKKIENLKEEVENYSKSFPLPGFDKY.

Lys-241 carries the post-translational modification N6-(pyridoxal phosphate)lysine.

Belongs to the SHMT family. In terms of assembly, homotetramer. Pyridoxal 5'-phosphate is required as a cofactor. Highest expression in the ovary and testis. 6- to 7-fold lower expression in hemocyte, silk gland, midgut and fat body.

The catalysed reaction is (6R)-5,10-methylene-5,6,7,8-tetrahydrofolate + glycine + H2O = (6S)-5,6,7,8-tetrahydrofolate + L-serine. It functions in the pathway one-carbon metabolism; tetrahydrofolate interconversion. In terms of biological role, interconversion of serine and glycine. This is Serine hydroxymethyltransferase (692975) from Bombyx mori (Silk moth).